The chain runs to 317 residues: Melanocyte-stimulating hormone receptor (317 aa).

The Extracellular segment spans residues 1–37 (MPVQGSQRRLLGSLNSTPTATPHLGLAANQTGARCLE). N29 is a glycosylation site (N-linked (GlcNAc...) asparagine). Residues 38–63 (VSVPDGLFLSLGLVSLVENVLVVTAI) form a helical membrane-spanning segment. The Cytoplasmic segment spans residues 64–72 (AKNRNLHSP). A helical membrane pass occupies residues 73–93 (MYCFICCLALSDLLVSGSNML). Residues 94–118 (ETAVTLLLEAGALAARAAVVQQLDN) are Extracellular-facing. A helical transmembrane segment spans residues 119-140 (VIDVITCSSMLSSLCFLGAIAV). Residues 141 to 163 (DRYISIFYALRYHSIVTLPRARR) lie on the Cytoplasmic side of the membrane. The chain crosses the membrane as a helical span at residues 164–183 (AVAAIWVASVLCSTLFIAYY). The Extracellular segment spans residues 184–191 (DHAAVLLC). The helical transmembrane segment at 192–211 (LVVFFLAMLVLMAVLYVHML) threads the bilayer. The Cytoplasmic portion of the chain corresponds to 212–240 (ARACQHAQGIARLHKRQRLAHQGFGLKGA). A helical membrane pass occupies residues 241–266 (ATLTILLGIFFLCWGPFFLHLTLIVL). Residues 267 to 279 (CPQHPTCSCIFKN) lie on the Extracellular side of the membrane. Residues 280–300 (FNLFLALIICNAIIDPLIYAF) form a helical membrane-spanning segment. At 301-317 (RSQELRRTLKEVLLCSW) the chain is on the cytoplasmic side. C315 is lipidated: S-palmitoyl cysteine.

Belongs to the G-protein coupled receptor 1 family. In terms of assembly, interacts with MGRN1, but does not undergo MGRN1-mediated ubiquitination; this interaction competes with GNAS-binding and thus inhibits agonist-induced cAMP production. Interacts with OPN3; the interaction results in a decrease in MC1R-mediated cAMP signaling and ultimately a decrease in melanin production in melanocytes.

The protein localises to the cell membrane. In terms of biological role, receptor for MSH (alpha, beta and gamma) and ACTH. The activity of this receptor is mediated by G proteins which activate adenylate cyclase. Mediates melanogenesis, the production of eumelanin (black/brown) and phaeomelanin (red/yellow), via regulation of cAMP signaling in melanocytes. This is Melanocyte-stimulating hormone receptor (MC1R) from Macaca sylvanus (Barbary macaque).